Here is a 297-residue protein sequence, read N- to C-terminus: MESDKSLLSAELNSEFEQALYEQMLLKAKQEMQNRLPNTPESKQIRPQPGFCIKTQTSEKAKIFINICKTNDIPAPPDLSEAELVNILESDDPSGYRVPMSIGEPHVEVDNSGNGCTVYDIVINSTFFDKMKSNELFREFFITVAMEGLENKYEMELSRDWRMLKNRKFMGSISDQNIRTKSKPIIQELDTSSSQTLQSKPLISEIQSSPKVPEYTIAAEPSEGHPSFLVAEISLPNVTSVRSLVLDLGEDRIVLWGRPDLYHLDIFLPYNIVQEESGAQFNRDTKVLTITMPVQTI.

It belongs to the PIH1 family.

Its subcellular location is the nucleus. Involved in the assembly of C/D box small nucleolar ribonucleoprotein (snoRNP) particles. Recruits the SWI/SNF complex to the core promoter of rRNA genes and enhances pre-rRNA transcription. Mediates interaction of TELO2 with the R2TP complex which is necessary for the stability of MTOR and SMG1. Positively regulates the assembly and activity of the mTORC1 complex. The sequence is that of PIH1 domain-containing protein 1 (pih1d1) from Xenopus laevis (African clawed frog).